Consider the following 280-residue polypeptide: uncharacterized protein (280 aa).

CBS domains follow at residues 10 to 67 (QNKK…GSKY), 90 to 146 (MEEN…KIDE), 154 to 209 (ITRD…DWAF), and 229 to 280 (MKRD…KYFA).

This is an uncharacterized protein from Methanocaldococcus jannaschii (strain ATCC 43067 / DSM 2661 / JAL-1 / JCM 10045 / NBRC 100440) (Methanococcus jannaschii).